We begin with the raw amino-acid sequence, 242 residues long: Small ribosomal subunit protein uS2 (242 aa).

Belongs to the universal ribosomal protein uS2 family.

This is Small ribosomal subunit protein uS2 from Photobacterium profundum (strain SS9).